Reading from the N-terminus, the 434-residue chain is Nucleobase transporter PlUacP (434 aa).

The next 12 membrane-spanning stretches (helical) occupy residues 9–29 (LGFQHVLAMYAGAVIVPLIVG), 39–59 (LAYLVSIDLLTCGIATLLQVW), 63–83 (FFGIGLPVMLGCTFTAVGPMI), 93–113 (AIYGSVLASGLFLALFAGFFG), 118–138 (FFPPIVTGSVVTIIGITLIPV), 159–179 (ALSFGVLLFIILANRFFTGFI), 181–201 (AISILLGLIFGTIAGAFMGKV), 218–238 (FYFGFPTFHLPSILTMTLVAI), 306–326 (VVITAGFILVILGFMPKIAAL), 327–347 (TLLIPTAVLGGAMIAMFGMVV), 365–385 (LLIIACSVSVGLGVTVAPNLF), and 394–414 (ILTSNGIVAGSLTAILMNFLF).

Belongs to the nucleobase:cation symporter-2 (NCS2) (TC 2.A.40) family.

Its subcellular location is the cell membrane. Its activity is regulated as follows. Inhibited by the proton gradient disruptor carbonyl cyanide m-chlorophenylhydrazone (CCCP), but not by the sodium gradient disruptor ouabain. Hypoxanthine, xanthine, cytosine and uric acid act as competitive inhibitors. Functionally, uptake of the purines adenine and guanine, and the pyrimidine uracil. Transport is probably proton-dependent. In Paenibacillus larvae subsp. larvae (strain NRRL B-3650 / LMG 16245), this protein is Nucleobase transporter PlUacP.